A 247-amino-acid polypeptide reads, in one-letter code: Diglucosylglycerate octanoyltransferase (247 aa).

This sequence belongs to the OctT acyltransferase family. In terms of assembly, homotetramer.

The enzyme catalyses (2R)-2-O-[alpha-D-glucopyranosyl-(1-&gt;6)-alpha-D-glucopyranosyl]-glycerate + octanoyl-CoA = (2R)-2-O-[6-O-octanoyl-alpha-D-glucopyranosyl-(1-&gt;6)-alpha-D-glucopyranosyl]-glycerate + CoA. Sugar octanoyltransferase likely involved in the biosynthesis of mycobacterial methylglucose lipopolysaccharide (MGLP). Catalyzes the transfer of an octanoyl group from octanoyl-CoA to the C6 OH of the second glucose in diglucosylglycerate (DGG). DGG is the preferred acceptor, but to a lesser extent, GG (glucosylglycerate) can also be used as substrate. DGG and GG are the two earliest intermediates in MGLP biosynthesis. The polypeptide is Diglucosylglycerate octanoyltransferase (Mycobacterium tuberculosis (strain ATCC 25618 / H37Rv)).